A 300-amino-acid chain; its full sequence is 33 kDa chaperonin (300 aa).

Cystine bridges form between C235/C237 and C269/C272.

This sequence belongs to the HSP33 family. In terms of processing, under oxidizing conditions two disulfide bonds are formed involving the reactive cysteines. Under reducing conditions zinc is bound to the reactive cysteines and the protein is inactive.

It is found in the cytoplasm. In terms of biological role, redox regulated molecular chaperone. Protects both thermally unfolding and oxidatively damaged proteins from irreversible aggregation. Plays an important role in the bacterial defense system toward oxidative stress. The polypeptide is 33 kDa chaperonin (Pseudomonas savastanoi pv. phaseolicola (strain 1448A / Race 6) (Pseudomonas syringae pv. phaseolicola (strain 1448A / Race 6))).